The sequence spans 203 residues: Recombination protein RecR (203 aa).

The C4-type zinc finger occupies 56–71; it reads CAVCGNVSDDERCRIC. The region spanning 79 to 179 is the Toprim domain; sequence SVVCVVEEPK…TVTRIASGLP (101 aa).

Belongs to the RecR family.

Functionally, may play a role in DNA repair. It seems to be involved in an RecBC-independent recombinational process of DNA repair. It may act with RecF and RecO. The sequence is that of Recombination protein RecR from Mycobacterium avium (strain 104).